The chain runs to 197 residues: Adenylate kinase (197 aa).

16–21 (GAGKGT) serves as a coordination point for ATP. Residues 36–65 (STGDILRDHVARGTALGQRVKPILDAGQLV) are NMP. AMP is bound by residues Thr37, Arg42, 63–65 (QLV), 90–93 (GFPR), and Gln97. Residues 131 to 147 (ERGRQAALRGEPVRSDD) are LID. An ATP-binding site is contributed by Arg132. AMP is bound by residues Arg144 and Arg155. Gly183 serves as a coordination point for ATP.

Belongs to the adenylate kinase family. In terms of assembly, monomer.

Its subcellular location is the cytoplasm. The catalysed reaction is AMP + ATP = 2 ADP. It functions in the pathway purine metabolism; AMP biosynthesis via salvage pathway; AMP from ADP: step 1/1. Functionally, catalyzes the reversible transfer of the terminal phosphate group between ATP and AMP. Plays an important role in cellular energy homeostasis and in adenine nucleotide metabolism. This is Adenylate kinase from Deinococcus geothermalis (strain DSM 11300 / CIP 105573 / AG-3a).